A 243-amino-acid polypeptide reads, in one-letter code: MMIKQSPFLLLTTILFTVAVFVAALDPAPEDPIFELYMHDLLGGSSPTARPITGLLGNIYNGQVPFAKQIGFTPPENGIAIPNANGALPTVNGINGVPLGTGLSGTAYSGQNLNGIQTQLGPDGLSLGFGTITVIDDILTSGPDLGSQPLGKAQGVYVASSADGSTQMMAFTAMLEGGEYNDNLNFYGIYRIGSAMSHLSVTGGTGRFKNACGFAEVRPLIPSGQHEVDGAESLLRIIVHLKY.

The N-terminal stretch at 1–24 (MMIKQSPFLLLTTILFTVAVFVAA) is a signal peptide.

The protein belongs to the plant dirigent protein family. Homodimer.

The protein localises to the secreted. Its subcellular location is the extracellular space. It localises to the apoplast. Its function is as follows. Dirigent proteins impart stereoselectivity on the phenoxy radical-coupling reaction, yielding optically active lignans from two molecules of coniferyl alcohol in the biosynthesis of lignans, flavonolignans, and alkaloids and thus plays a central role in plant secondary metabolism. The chain is Dirigent protein 16 (DIR16) from Arabidopsis thaliana (Mouse-ear cress).